Consider the following 126-residue polypeptide: MADMKWAVAHIKSSFNNTIITVTDITGAETIAKSSGGMVVKAARDESSPYTAMQMAGQLADQLKDKGINGIHIRVRAPGGNKQRSPGPGAQAAIRAFARAGIRIGRIEDVTPVPHDGTRPKGGRRV.

The protein belongs to the universal ribosomal protein uS11 family. In terms of assembly, part of the 30S ribosomal subunit.

Functionally, located on the platform of the 30S subunit. The sequence is that of Small ribosomal subunit protein uS11 from Methanosarcina acetivorans (strain ATCC 35395 / DSM 2834 / JCM 12185 / C2A).